A 272-amino-acid polypeptide reads, in one-letter code: R-spondin-3 (272 aa).

The N-terminal stretch at 1–21 is a signal peptide; it reads MHLRLISWLFIILNFMEYIGS. 2 FU repeats span residues 35–86 and 92–135; these read PNVS…GYYG and INKC…GLEA. N-linked (GlcNAc...) asparagine glycosylation is present at Asn-36. Cystine bridges form between Cys-41-Cys-48, Cys-45-Cys-54, Cys-57-Cys-76, Cys-80-Cys-95, Cys-98-Cys-105, Cys-102-Cys-111, Cys-114-Cys-125, Cys-129-Cys-142, Cys-148-Cys-190, Cys-159-Cys-166, and Cys-199-Cys-206. Positions 147-207 constitute a TSP type-1 domain; sequence HCEVSEWNPW…KCTVQRKKCQ (61 aa). Residues 201–272 are disordered; it reads VQRKKCQKGE…QKSVSVSTVH (72 aa). The segment covering 213-223 has biased composition (basic residues); sequence KKGRERKRKKP. A compositionally biased stretch (basic and acidic residues) spans 224-252; it reads NKGESKEAIPDSKSLESSKEIPEQRENKQ.

This sequence belongs to the R-spondin family. In terms of assembly, interacts with the extracellular domain of FZD8 and LRP6. It however does not form a ternary complex with FZD8 and LRP6. Interacts with WNT1. Binds heparin. Interacts with LGR4, LGR5 and LGR6. Ubiquitously expressed. Expressed at higher level in placenta, small intestine, fetal thymus and lymph node. Highly expressed in endothelial cells.

It is found in the secreted. Activator of the canonical Wnt signaling pathway by acting as a ligand for LGR4-6 receptors, which acts as a key regulator of angiogenesis. Upon binding to LGR4-6 (LGR4, LGR5 or LGR6), LGR4-6 associate with phosphorylated LRP6 and frizzled receptors that are activated by extracellular Wnt receptors, triggering the canonical Wnt signaling pathway to increase expression of target genes. Also regulates the canonical Wnt/beta-catenin-dependent pathway and non-canonical Wnt signaling by acting as an inhibitor of ZNRF3, an important regulator of the Wnt signaling pathway. Acts as a ligand for frizzled FZD8 and LRP6. May negatively regulate the TGF-beta pathway. Acts as a key regulator of angiogenesis by controlling vascular stability and pruning: acts by activating the non-canonical Wnt signaling pathway in endothelial cells. Can also amplify Wnt signaling pathway independently of LGR4-6 receptors, possibly by acting as a direct antagonistic ligand to RNF43 and ZNRF3. This chain is R-spondin-3 (RSPO3), found in Homo sapiens (Human).